Reading from the N-terminus, the 428-residue chain is Folylpolyglutamate synthase (428 aa).

Position 49–52 (49–52 (GKGS)) interacts with ATP. Ser-73 contacts Mg(2+). (6R)-5,10-methylenetetrahydrofolyl-(gamma-L-Glu)n is bound by residues Phe-75 and Arg-82. Residues Glu-143 and His-170 each contribute to the Mg(2+) site. Lys-185 bears the N6-carboxylysine mark. ATP contacts are provided by residues Asn-264, Arg-300, and 313–316 (DGAH). Position 417 (Ser-417) interacts with (6R)-5,10-methylenetetrahydrofolyl-(gamma-L-Glu)n.

The protein belongs to the folylpolyglutamate synthase family. As to quaternary structure, monomer. It depends on Mg(2+) as a cofactor.

It catalyses the reaction (6S)-5,6,7,8-tetrahydrofolyl-(gamma-L-Glu)(n) + L-glutamate + ATP = (6S)-5,6,7,8-tetrahydrofolyl-(gamma-L-Glu)(n+1) + ADP + phosphate + H(+). It carries out the reaction (6R)-5,10-methylenetetrahydrofolyl-(gamma-L-Glu)(n) + L-glutamate + ATP = (6R)-5,10-methylenetetrahydrofolyl-(gamma-L-Glu)(n+1) + ADP + phosphate + H(+). The catalysed reaction is 10-formyltetrahydrofolyl-(gamma-L-Glu)(n) + L-glutamate + ATP = 10-formyltetrahydrofolyl-(gamma-L-Glu)(n+1) + ADP + phosphate + H(+). Its activity is regulated as follows. Competitively inhibited by adenosine 5'-(3-thio)triphosphate and beta,gamma-methylene-ATP. Its function is as follows. Involved in the conversion of folates to polyglutamate derivatives, and likely functions in the retention of cellular folate pools. Catalyzes successive MgATP-dependent additions of glutamate to a pteroylmonoglutamate substrate, with a high preference for 5,10-methylenetetrahydrofolate (mTHF). Thus, metabolizes mTHF to the tetraglutamate derivative, but longer glutamate chain length products are not observed. Tetrahydrofolate (H4PteGlu) and 10-formyl-H4PteGlu are poorer folate substrates. In contrast to E.coli FolC, this enzyme does not display dihydrofolate synthase activity. This is Folylpolyglutamate synthase from Lacticaseibacillus casei (Lactobacillus casei).